Reading from the N-terminus, the 264-residue chain is Cell division protein FtsQ (264 aa).

The tract at residues 1 to 24 (MAGPTTAERGARQQESSGPPRVRR) is disordered. Residues 1–32 (MAGPTTAERGARQQESSGPPRVRRFRPPRLRT) are Cytoplasmic-facing. Residues 33–53 (IIILAVALVLVAGGTVWVLYG) traverse the membrane as a helical segment. Residues 54-264 (SNWTRLERVS…VATAPASSGS (211 aa)) are Extracellular-facing. Residues 57 to 126 (TRLERVSVSG…HGIGLKVTER (70 aa)) form the POTRA domain.

This sequence belongs to the FtsQ/DivIB family. FtsQ subfamily.

It localises to the cell membrane. Essential cell division protein. This is Cell division protein FtsQ from Streptomyces coelicolor (strain ATCC BAA-471 / A3(2) / M145).